We begin with the raw amino-acid sequence, 251 residues long: Imidazole glycerol phosphate synthase subunit HisF (251 aa).

Residues aspartate 11 and aspartate 130 contribute to the active site.

Belongs to the HisA/HisF family. As to quaternary structure, heterodimer of HisH and HisF.

The protein resides in the cytoplasm. The catalysed reaction is 5-[(5-phospho-1-deoxy-D-ribulos-1-ylimino)methylamino]-1-(5-phospho-beta-D-ribosyl)imidazole-4-carboxamide + L-glutamine = D-erythro-1-(imidazol-4-yl)glycerol 3-phosphate + 5-amino-1-(5-phospho-beta-D-ribosyl)imidazole-4-carboxamide + L-glutamate + H(+). The protein operates within amino-acid biosynthesis; L-histidine biosynthesis; L-histidine from 5-phospho-alpha-D-ribose 1-diphosphate: step 5/9. Its function is as follows. IGPS catalyzes the conversion of PRFAR and glutamine to IGP, AICAR and glutamate. The HisF subunit catalyzes the cyclization activity that produces IGP and AICAR from PRFAR using the ammonia provided by the HisH subunit. The polypeptide is Imidazole glycerol phosphate synthase subunit HisF (Chlorobium phaeovibrioides (strain DSM 265 / 1930) (Prosthecochloris vibrioformis (strain DSM 265))).